The sequence spans 108 residues: UPF0145 protein LCABL_07110 (108 aa).

This sequence belongs to the UPF0145 family.

This chain is UPF0145 protein LCABL_07110, found in Lacticaseibacillus casei (strain BL23) (Lactobacillus casei).